Consider the following 183-residue polypeptide: dCTP deaminase, dUMP-forming (183 aa).

DCTP is bound by residues 99-104, D117, 125-127, Q146, Y159, K166, and Q170; these read KSSIAR and TLE. E127 acts as the Proton donor/acceptor in catalysis.

The protein belongs to the dCTP deaminase family. Homotrimer.

It catalyses the reaction dCTP + 2 H2O = dUMP + NH4(+) + diphosphate. The protein operates within pyrimidine metabolism; dUMP biosynthesis; dUMP from dCTP: step 1/1. Its function is as follows. Bifunctional enzyme that catalyzes both the deamination of dCTP to dUTP and the hydrolysis of dUTP to dUMP without releasing the toxic dUTP intermediate. In Methanoregula boonei (strain DSM 21154 / JCM 14090 / 6A8), this protein is dCTP deaminase, dUMP-forming.